We begin with the raw amino-acid sequence, 348 residues long: Phosphate acyltransferase (348 aa).

This sequence belongs to the PlsX family. Homodimer. Probably interacts with PlsY.

It localises to the cytoplasm. The enzyme catalyses a fatty acyl-[ACP] + phosphate = an acyl phosphate + holo-[ACP]. It participates in lipid metabolism; phospholipid metabolism. Catalyzes the reversible formation of acyl-phosphate (acyl-PO(4)) from acyl-[acyl-carrier-protein] (acyl-ACP). This enzyme utilizes acyl-ACP as fatty acyl donor, but not acyl-CoA. The protein is Phosphate acyltransferase of Rhizorhabdus wittichii (strain DSM 6014 / CCUG 31198 / JCM 15750 / NBRC 105917 / EY 4224 / RW1) (Sphingomonas wittichii).